Here is an 897-residue protein sequence, read N- to C-terminus: Leucine--tRNA ligase (897 aa).

The short motif at 49 to 59 is the 'HIGH' region element; it reads PYPSGKLHMGH. The short motif at 654-658 is the 'KMSKS' region element; the sequence is KMSKS. Lysine 657 lines the ATP pocket.

Belongs to the class-I aminoacyl-tRNA synthetase family.

The protein resides in the cytoplasm. It carries out the reaction tRNA(Leu) + L-leucine + ATP = L-leucyl-tRNA(Leu) + AMP + diphosphate. The chain is Leucine--tRNA ligase from Methylibium petroleiphilum (strain ATCC BAA-1232 / LMG 22953 / PM1).